The chain runs to 272 residues: MSETDMRLVVVGAAGRMGQTLIRIVHETPGVRLHAAIERSGSPFLGRDAGELAGVGQMGVAVSDKPLEAFVEAEGVLDFTAPSATVEFADLAAQARIVHVVGTTGCSADDEARIRAAARHARVIKSGNMSLGVNLLGVLTEKAARALPAQGWDIEILEMHHRHKVDAPSGTALLLGEAAARGRGIKLADHSVRVRDGHTGARVEGAIGFATLRGGSVIGEHSVVIAGEGEMVTLSHSATDRSIFARGAVSAAIWGRSQKPGFYSMLDVLGLD.

NAD(+) contacts are provided by residues 12–17 (GAAGRM) and Glu38. Arg39 contacts NADP(+). Residues 102–104 (GTT) and 126–129 (SGNM) contribute to the NAD(+) site. The active-site Proton donor/acceptor is His160. His161 lines the (S)-2,3,4,5-tetrahydrodipicolinate pocket. The active-site Proton donor is the Lys164. (S)-2,3,4,5-tetrahydrodipicolinate is bound at residue 170-171 (GT).

Belongs to the DapB family.

It is found in the cytoplasm. It catalyses the reaction (S)-2,3,4,5-tetrahydrodipicolinate + NAD(+) + H2O = (2S,4S)-4-hydroxy-2,3,4,5-tetrahydrodipicolinate + NADH + H(+). It carries out the reaction (S)-2,3,4,5-tetrahydrodipicolinate + NADP(+) + H2O = (2S,4S)-4-hydroxy-2,3,4,5-tetrahydrodipicolinate + NADPH + H(+). It functions in the pathway amino-acid biosynthesis; L-lysine biosynthesis via DAP pathway; (S)-tetrahydrodipicolinate from L-aspartate: step 4/4. Its function is as follows. Catalyzes the conversion of 4-hydroxy-tetrahydrodipicolinate (HTPA) to tetrahydrodipicolinate. This is 4-hydroxy-tetrahydrodipicolinate reductase from Sinorhizobium medicae (strain WSM419) (Ensifer medicae).